A 194-amino-acid polypeptide reads, in one-letter code: uncharacterized protein (194 aa).

It to A.rhizogenes plasmid pRia4B ORF-3 in virA region.

This is an uncharacterized protein from Sinorhizobium fredii (strain NBRC 101917 / NGR234).